Here is a 525-residue protein sequence, read N- to C-terminus: GMP synthase [glutamine-hydrolyzing] (525 aa).

In terms of domain architecture, Glutamine amidotransferase type-1 spans 12-203 (TVLVVDFGAQ…LYRGAGLTPS (192 aa)). Cys89 (nucleophile) is an active-site residue. Catalysis depends on residues His177 and Glu179. Residues 204–399 (WTTGNVIDEQ…LGLPDEIVQR (196 aa)) enclose the GMPS ATP-PPase domain. An ATP-binding site is contributed by 231 to 237 (SGGVDSA).

As to quaternary structure, homodimer.

It catalyses the reaction XMP + L-glutamine + ATP + H2O = GMP + L-glutamate + AMP + diphosphate + 2 H(+). The protein operates within purine metabolism; GMP biosynthesis; GMP from XMP (L-Gln route): step 1/1. Its function is as follows. Catalyzes the synthesis of GMP from XMP. The chain is GMP synthase [glutamine-hydrolyzing] from Streptomyces avermitilis (strain ATCC 31267 / DSM 46492 / JCM 5070 / NBRC 14893 / NCIMB 12804 / NRRL 8165 / MA-4680).